Consider the following 120-residue polypeptide: Glycine cleavage system H protein (120 aa).

Positions 19-101 (DGTVGISDFA…YTDGWLFRLD (83 aa)) constitute a Lipoyl-binding domain. Residue lysine 60 is modified to N6-lipoyllysine.

The protein belongs to the GcvH family. The glycine cleavage system is composed of four proteins: P, T, L and H. It depends on (R)-lipoate as a cofactor.

In terms of biological role, the glycine cleavage system catalyzes the degradation of glycine. The H protein shuttles the methylamine group of glycine from the P protein to the T protein. This Deinococcus geothermalis (strain DSM 11300 / CIP 105573 / AG-3a) protein is Glycine cleavage system H protein.